Reading from the N-terminus, the 476-residue chain is Probable isoprenylcysteine alpha-carbonyl methylesterase ICMEL1 (476 aa).

Polar residues predominate over residues 92–104; it reads NCLSAFSDDTNGT. The segment at 92–116 is disordered; the sequence is NCLSAFSDDTNGTADGGNNSGDRQT. A run of 2 helical transmembrane segments spans residues 153–173 and 208–228; these read FMALGCYAFLLMPGFIQVGYY and VVAFVTGGAWIIGYKAWGSLL. Substrate contacts are provided by residues 214–216 and 285–287; these read GGA and QSA. Active-site residues include Ser-286, Asp-388, and His-420.

The protein belongs to the AB hydrolase superfamily. Isoprenylcysteine methylesterase family. In terms of tissue distribution, expressed in roots, rosette and cauline leaves, stems, flowers and siliques.

It is found in the endoplasmic reticulum membrane. The protein resides in the golgi apparatus membrane. The enzyme catalyses [protein]-C-terminal S-[(2E,6E)-farnesyl]-L-cysteine methyl ester + H2O = [protein]-C-terminal S-[(2E,6E)-farnesyl]-L-cysteine + methanol + H(+). Its function is as follows. Catalyzes the demethylation of isoprenylcysteine methylesters. May be involved in the regulation of ABA signaling. This chain is Probable isoprenylcysteine alpha-carbonyl methylesterase ICMEL1, found in Arabidopsis thaliana (Mouse-ear cress).